Here is a 329-residue protein sequence, read N- to C-terminus: Beta-ketoacyl-[acyl-carrier-protein] synthase III (329 aa).

Residues C123 and H256 contribute to the active site. Residues Q257–R261 form an ACP-binding region. Residue N286 is part of the active site.

It belongs to the thiolase-like superfamily. FabH family. Homodimer.

It localises to the cytoplasm. The catalysed reaction is malonyl-[ACP] + acetyl-CoA + H(+) = 3-oxobutanoyl-[ACP] + CO2 + CoA. It functions in the pathway lipid metabolism; fatty acid biosynthesis. In terms of biological role, catalyzes the condensation reaction of fatty acid synthesis by the addition to an acyl acceptor of two carbons from malonyl-ACP. Catalyzes the first condensation reaction which initiates fatty acid synthesis and may therefore play a role in governing the total rate of fatty acid production. Possesses both acetoacetyl-ACP synthase and acetyl transacylase activities. Its substrate specificity determines the biosynthesis of branched-chain and/or straight-chain of fatty acids. The polypeptide is Beta-ketoacyl-[acyl-carrier-protein] synthase III (Burkholderia lata (strain ATCC 17760 / DSM 23089 / LMG 22485 / NCIMB 9086 / R18194 / 383)).